Consider the following 377-residue polypeptide: Pyruvate dehydrogenase E1 component subunit alpha, mitochondrial (377 aa).

The transit peptide at 1–26 (MLSNFLKVNSKALGHIRTFASKSGEI) directs the protein to the mitochondrion. Pyruvate-binding residues include His83, Tyr109, Arg110, Gly156, Val158, Asp187, Gly188, Ala189, Asn216, and Tyr218. 8 residues coordinate thiamine diphosphate: Tyr109, Arg110, Gly156, Val158, Asp187, Gly188, Ala189, and Asn216. Position 187 (Asp187) interacts with Mg(2+). Residues Asn216 and Tyr218 each coordinate Mg(2+). His283 contributes to the thiamine diphosphate binding site.

In terms of assembly, tetramer of 2 alpha and 2 beta subunits. Thiamine diphosphate is required as a cofactor. Requires Mg(2+) as cofactor.

The protein localises to the mitochondrion matrix. It carries out the reaction N(6)-[(R)-lipoyl]-L-lysyl-[protein] + pyruvate + H(+) = N(6)-[(R)-S(8)-acetyldihydrolipoyl]-L-lysyl-[protein] + CO2. Its activity is regulated as follows. E1 activity is regulated by phosphorylation (inactivation) and dephosphorylation (activation) of the alpha subunit. The pyruvate dehydrogenase complex catalyzes the overall conversion of pyruvate to acetyl-CoA and CO(2). It contains multiple copies of three enzymatic components: pyruvate dehydrogenase (E1), dihydrolipoamide acetyltransferase (E2) and lipoamide dehydrogenase (E3). In Dictyostelium discoideum (Social amoeba), this protein is Pyruvate dehydrogenase E1 component subunit alpha, mitochondrial (pdhA).